The sequence spans 109 residues: Thioredoxin-like protein slr1139 (109 aa).

The 106-residue stretch at serine 2–aspartate 107 folds into the Thioredoxin domain. Residues cysteine 31 and cysteine 34 are joined by a disulfide bond.

This sequence belongs to the thioredoxin family.

The polypeptide is Thioredoxin-like protein slr1139 (Synechocystis sp. (strain ATCC 27184 / PCC 6803 / Kazusa)).